Here is a 611-residue protein sequence, read N- to C-terminus: Threonine--tRNA ligase (611 aa).

A disordered region spans residues 1 to 25; sequence MAGPDRKPVSSAAATTPAPSAPVVL. The segment covering 9–24 has biased composition (low complexity); it reads VSSAAATTPAPSAPVV. Positions 209–502 are catalytic; that stretch reads DHRRIGKDLD…MTENYAGDYP (294 aa). The Zn(2+) site is built by cysteine 302, histidine 353, and histidine 479.

This sequence belongs to the class-II aminoacyl-tRNA synthetase family. As to quaternary structure, homodimer. The cofactor is Zn(2+).

It localises to the cytoplasm. The catalysed reaction is tRNA(Thr) + L-threonine + ATP = L-threonyl-tRNA(Thr) + AMP + diphosphate + H(+). In terms of biological role, catalyzes the attachment of threonine to tRNA(Thr) in a two-step reaction: L-threonine is first activated by ATP to form Thr-AMP and then transferred to the acceptor end of tRNA(Thr). Also edits incorrectly charged L-seryl-tRNA(Thr). This is Threonine--tRNA ligase from Parasynechococcus marenigrum (strain WH8102).